We begin with the raw amino-acid sequence, 197 residues long: Small ribosomal subunit protein uS4y (197 aa).

The S4 RNA-binding domain maps to 109–183 (RRLQTIVFKS…VKRRNERAGA (75 aa)). Residues 161 to 197 (SLTSPFGGGRPGRVKRRNERAGAKKASGGDGDEDDEE) are disordered.

It belongs to the universal ribosomal protein uS4 family. As to quaternary structure, binds to the translation initiation factors TIF3E1.

The sequence is that of Small ribosomal subunit protein uS4y (RPS9C) from Arabidopsis thaliana (Mouse-ear cress).